A 63-amino-acid chain; its full sequence is Cysteine-rich venom protein 3 (63 aa).

Residues 1–25 (MRKPITLILVVALALVLLATSEVSA) form the signal peptide. 3 disulfide bridges follow: Cys29–Cys43, Cys36–Cys48, and Cys42–Cys58.

Expressed by the venom gland.

Its subcellular location is the secreted. This is Cysteine-rich venom protein 3 from Pimpla hypochondriaca (Parasitoid wasp).